A 315-amino-acid polypeptide reads, in one-letter code: ADP/ATP translocase (315 aa).

The Mitochondrial intermembrane segment spans residues 1 to 13 (MSNKQETKILGMP). Solcar repeat units lie at residues 13–106 (PPFV…FKAM) and 118–210 (KWMA…IKPV). A helical membrane pass occupies residues 14–37 (PFVVDFLMGGVSAAVSKTAAAPIE). Lys30 lines the bongkrekate pocket. At 38–80 (RIKLLVQNQDEMIKAGRLDRRYNGIIDCFRRTTADEGLMALWR) the chain is on the mitochondrial matrix side. A cardiolipin contacts are provided by residues Ile62 and 81–83 (GNT). Residues 81–104 (GNTANVIRYFPTQALNFAFRDKFK) form a helical membrane-spanning segment. Arg88 provides a ligand contact to ADP. Residues 88-89 (RY) and Asn96 contribute to the bongkrekate site. Residues 105-115 (AMFGYKKDKDG) lie on the Mitochondrial intermembrane side of the membrane. Residues 116-145 (YAKWMAGNLASGGAAGATSLLFVYSLDYAR) form a helical membrane-spanning segment. The Mitochondrial matrix segment spans residues 146–184 (TRLANDAKSAKGGGARQFNGLIDVYRKTLASDGIAGLYR). Residues Leu166 and 184-185 (RG) contribute to the a cardiolipin site. A helical transmembrane segment spans residues 185-213 (GFGPSVAGIVVYRGLYFGMYDSIKPVVLV). 196 to 197 (YR) is a binding site for bongkrekate. The Mitochondrial intermembrane segment spans residues 214 to 216 (GPL). The chain crosses the membrane as a helical span at residues 217 to 242 (ANNFLASFLLGWCVTTGAGIASYPLD). One copy of the Solcar repeat lies at 218-304 (NNFLASFLLG…LSIYDQLQIL (87 aa)). At 243–283 (TVRRRMMMTSGEAVKYKSSIDAFRQIIAKEGVKSLFKGAGA) the chain is on the mitochondrial matrix side. Arg245 provides a ligand contact to ADP. Positions 245–250 (RRRMMM) match the Nucleotide carrier signature motif motif. A cardiolipin contacts are provided by residues 260-261 (SS) and 280-282 (GAG). A helical membrane pass occupies residues 284-304 (NILRGVAGAGVLSIYDQLQIL). The Mitochondrial intermembrane portion of the chain corresponds to 305–315 (LFGKAFKGGSG).

The protein belongs to the mitochondrial carrier (TC 2.A.29) family. Monomer.

The protein localises to the mitochondrion inner membrane. It catalyses the reaction ADP(in) + ATP(out) = ADP(out) + ATP(in). With respect to regulation, the matrix-open state (m-state) is inhibited by the membrane-permeable bongkrekic acid (BKA). The cytoplasmic-open state (c-state) is inhibited by the membrane-impermeable toxic inhibitor carboxyatractyloside (CATR). ADP:ATP antiporter that mediates import of ADP into the mitochondrial matrix for ATP synthesis, and export of ATP out to fuel the cell. Cycles between the cytoplasmic-open state (c-state) and the matrix-open state (m-state): operates by the alternating access mechanism with a single substrate-binding site intermittently exposed to either the cytosolic (c-state) or matrix (m-state) side of the inner mitochondrial membrane. This Thermothelomyces thermophilus (strain ATCC 42464 / BCRC 31852 / DSM 1799) (Sporotrichum thermophile) protein is ADP/ATP translocase.